Consider the following 689-residue polypeptide: MTHQYLIEIGLEDMPAHVVTPSLQQFHDKTVAFLKENHLDHGAIDQYATPRRLALLIHDLADKQADVEEDVKGPAKKIAQDADGNWTKAAIGFSRGQGMTPDDIVFKTIKGVDYVYLHKAIKGKTAAAILPGMLDVIKSLTFPTRMKWGAYDFEYIRPIHWLVSLLDDAIVPMKLLDVDAGRTTQGHRFLGRPVTLGNAADYVAALKAQFVIVEPAARKQLISDQIHQIAADHQWQIDLDADLLEEVNNLVEWPTAFAGNFDEKYLKIPEAVLITSMKDNQRYFYARDASGKMVNAFIGVRNGNADHLANVIAGNEKVLTARLEDAAFFYAEDQKRSIADDVDRLKAVSFHDKISSMYDKMARTRVIADLLADRFGLSATDKADLDRAASIYKFDLVTSMVGEFPELQGIMGEHYAQLAGEKPAVAQAIAEHYEPISADGALPESLVGTVLAIADKFDSLMSFFAVDLIPSGSNDPYALRRQAYGIVRMIAKHDWPFAVAELQTTIADALKAAGKTNNLDFAAHQQDLNAFMIDRAKQVLQGQKIRHDIVDAVTVRADADLAGILDAAKILSAHADDTDFKPVMEALGRVLRITKKQQVKVDVDTAKFENPSEGQLYDATVATAKKFDDEPTEADYQALKALADPINAYFDATMVMADDQAIRQNRLAALLQLAALIKQFGDVSQVIVK.

Belongs to the class-II aminoacyl-tRNA synthetase family. In terms of assembly, tetramer of two alpha and two beta subunits.

It localises to the cytoplasm. The catalysed reaction is tRNA(Gly) + glycine + ATP = glycyl-tRNA(Gly) + AMP + diphosphate. In Lacticaseibacillus casei (strain BL23) (Lactobacillus casei), this protein is Glycine--tRNA ligase beta subunit.